Here is a 434-residue protein sequence, read N- to C-terminus: L-2-hydroxyglutarate dehydrogenase, mitochondrial (434 aa).

This sequence belongs to the L2HGDH family. It depends on FAD as a cofactor.

It is found in the mitochondrion. It catalyses the reaction (S)-2-hydroxyglutarate + A = 2-oxoglutarate + AH2. This chain is L-2-hydroxyglutarate dehydrogenase, mitochondrial, found in Caenorhabditis briggsae.